The following is a 115-amino-acid chain: Small polypeptide DEVIL 13 (115 aa).

A compositionally biased stretch (basic and acidic residues) spans 1 to 12; the sequence is MEEKWKLSKKDT. The segment at 1 to 89 is disordered; it reads MEEKWKLSKK…SITQKYSSLA (89 aa). Over residues 13 to 65 the composition is skewed to low complexity; that stretch reads TASSSSSKSKFSRSFSTSASSTKSPIFVRSSSTKCSVPSSSSSSSSSSSISRS. Residues 44-63 form a helical membrane-spanning segment; it reads STKCSVPSSSSSSSSSSSIS. The tract at residues 80–111 is required for DVL/RTFL small polypeptide activity; that stretch reads SITQKYSSLAKEQKARFYIMRRCVAMLVCWHK.

This sequence belongs to the DVL/RTFL small polypeptides family.

Its subcellular location is the cell membrane. Its function is as follows. Small polypeptide acting as a regulatory molecule which coordinates cellular responses required for differentiation, growth and development, probably by restricting polar cell proliferation in lateral organs and coordinating socket cell recruitment and differentiation at trichome sites. In Arabidopsis thaliana (Mouse-ear cress), this protein is Small polypeptide DEVIL 13.